Consider the following 377-residue polypeptide: MAEEVVVVAKFDYVAQQEQELDIKKNERLWLLDDSKSWWRVRNSMNKTGFVPSNYVERKNSARKASIVKNLKDTLGIGKVKRKPSVPDSASPADDSFVDPGERLYDLNMPAYVKFNYMAEREDELSLIKGTKVIVMEKCSDGWWRGSYNGQVGWFPSNYVTEEGDSPLGDHVGSLSEKLAAVVNNLNTGQVLHVVQALYPFSSSNDEELNFEKGDVMDVIEKPENDPEWWKCRKINGMVGLVPKNYVTVMQNNPLTSGLEPSPPQCDYIRPSLTGKFAGNPWYYGKVTRHQAEMALNERGHEGDFLIRDSESSPNDFSVSLKAQGKNKHFKVQLKETVYCIGQRKFSTMEELVEHYKKAPIFTSEQGEKLYLVKHLS.

Residue Ala2 is modified to N-acetylalanine. The 60-residue stretch at 2-61 folds into the SH3 1 domain; it reads AEEVVVVAKFDYVAQQEQELDIKKNERLWLLDDSKSWWRVRNSMNKTGFVPSNYVERKNS. Phosphoserine occurs at positions 85, 89, 91, and 96. Tyr105 carries the phosphotyrosine modification. Positions 106–165 constitute an SH3 2 domain; sequence DLNMPAYVKFNYMAEREDELSLIKGTKVIVMEKCSDGWWRGSYNGQVGWFPSNYVTEEGD. Ser166 is subject to Phosphoserine. The 63-residue stretch at 190–252 folds into the SH3 3 domain; it reads QVLHVVQALY…PKNYVTVMQN (63 aa). Residues 282–376 form the SH2 domain; that stretch reads WYYGKVTRHQ…GEKLYLVKHL (95 aa).

As to quaternary structure, interacts (via SH2 domain and SH3 domain 2) with EGFR. Interacts with PAK1 and SOS1. Interacts (via SH3 domains) with PKN2. Associates with BLNK, PLCG1, VAV1 and NCK1 in a B-cell antigen receptor-dependent fashion. Interacts with SOCS7. This interaction is required for nuclear import. Part of a complex containing PPP1R15B, PP1 and NCK1. Interacts with RALGPS1. Interacts with CAV2 (tyrosine phosphorylated form). Interacts with ADAM15. Interacts with FASLG. Directly interacts with RASA1. Interacts with isoform 4 of MINK1. Interacts with FLT1 (tyrosine phosphorylated). Interacts with KDR (tyrosine phosphorylated). Interacts (via SH2 domain) with EPHB1; activates the JUN cascade to regulate cell adhesion. Interacts with EPHA2. Interacts (via SH2 domain) with PDGFRB (tyrosine phosphorylated). Interacts with the inactive form of EIF2AK2/PKR. Interacts with PTPN1. Interacts with INSR/insulin receptor (in response to insulin stimulation); This interaction may mediate PTPN1 recruitment leading to INSR dephosphorylation. Interacts with IRS1. Post-translationally, phosphorylated on Ser and Tyr residues. Phosphorylated in response to activation of EGFR and FcERI. Phosphorylated by activated PDGFRB.

The protein localises to the cytoplasm. It localises to the endoplasmic reticulum. The protein resides in the nucleus. In terms of biological role, adapter protein which associates with tyrosine-phosphorylated growth factor receptors, such as KDR and PDGFRB, or their cellular substrates. Maintains low levels of EIF2S1 phosphorylation by promoting its dephosphorylation by PP1. Plays a role in the DNA damage response, not in the detection of the damage by ATM/ATR, but for efficient activation of downstream effectors, such as that of CHEK2. Plays a role in ELK1-dependent transcriptional activation in response to activated Ras signaling. Modulates the activation of EIF2AK2/PKR by dsRNA. May play a role in cell adhesion and migration through interaction with ephrin receptors. The chain is SH2/SH3 adapter protein NCK1 (NCK1) from Homo sapiens (Human).